Reading from the N-terminus, the 73-residue chain is Crustacean hyperglycemic hormone (73 aa).

Disulfide bonds link Cys-7–Cys-43, Cys-23–Cys-39, and Cys-26–Cys-52. Position 73 is a serine amide (Ser-73).

As to expression, produced by the medulla terminalis X-organ in the eyestalks and transported to the sinus gland where they are stored and released. Found also in the brain; in the neuroendocrine structures of the protocerebrum.

It localises to the secreted. Its function is as follows. Hormone found in the sinus gland of isopods and decapods which controls the blood sugar level. Has a secretagogue action over the amylase released from the midgut gland. May act as a stress hormone and may be involved in the control of molting and reproduction. In Armadillidium vulgare (Pillbug), this protein is Crustacean hyperglycemic hormone.